Consider the following 149-residue polypeptide: Transcriptional repressor NrdR (149 aa).

A zinc finger spans residues 3 to 34; it reads CPFCQSDDTKVLDTRLIDDGSQVRRRRECVSC. Residues 49–139 form the ATP-cone domain; that stretch reads PHLIKSDDSR…VYRQFQDIEA (91 aa).

It belongs to the NrdR family. The cofactor is Zn(2+).

Negatively regulates transcription of bacterial ribonucleotide reductase nrd genes and operons by binding to NrdR-boxes. This is Transcriptional repressor NrdR from Ruthia magnifica subsp. Calyptogena magnifica.